The sequence spans 500 residues: Probable serine carboxypeptidase CPVL (500 aa).

Positions 1-23 are cleaved as a signal peptide; it reads MKVSLSFLLTILIVIITIKVNLS. Residues N110 and N161 are each glycosylated (N-linked (GlcNAc...) asparagine). The active site involves S233. N333 and N360 each carry an N-linked (GlcNAc...) asparagine glycan. Catalysis depends on residues D414 and H474.

This sequence belongs to the peptidase S10 family.

It localises to the secreted. In terms of biological role, may be involved in the digestion of phagocytosed particles in the lysosome, participation in an inflammatory protease cascade, and trimming of peptides for antigen presentation. The sequence is that of Probable serine carboxypeptidase CPVL (cpvl) from Dictyostelium discoideum (Social amoeba).